Reading from the N-terminus, the 773-residue chain is Polymeric immunoglobulin receptor (773 aa).

The first 18 residues, 1-18, serve as a signal peptide directing secretion; the sequence is MALFLLTCLLAVFSAATA. Over 19 to 647 the chain is Extracellular; sequence QSSLLGPSSI…SASGQSGSAK (629 aa). Residues 25-131 enclose the Ig-like V-type 1; required for binding to polymeric IgA and IgM domain; that stretch reads PSSIFGPGEV…RGLDFGVNVL (107 aa). 5 disulfide bridges follow: C46–C115, C155–C225, C260–C324, C369–C438, and C478–C538. K88 carries N-linked (GlcNAc...) asparagine; in variant N-88 glycosylation. N-linked (GlcNAc...) asparagine glycosylation is present at N108. 4 consecutive Ig-like V-type domains span residues 138–232, 233–340, 352–455, and 461–557; these read PDDV…SDPT, AEEQ…TQLR, RSPP…LQIV, and PTID…VELT. N-linked (GlcNAc...) asparagine glycosylation occurs at N418. The disordered stretch occupies residues 619–641; it reads AVQSAEDPASGSRASVDASSASG. Positions 632 to 641 are enriched in low complexity; it reads ASVDASSASG. A helical membrane pass occupies residues 648–670; the sequence is VLISTLVPLGLVLAAGAMAVAIA. At 671–773 the chain is on the cytoplasmic side; it reads RARHRRNVDR…AEHQDGPKEA (103 aa). Phosphoserine occurs at positions 682, 691, 698, and 744. The interval 725–746 is disordered; the sequence is ATATESTVEIEEPKKAKRSSKE. Basic and acidic residues predominate over residues 735 to 746; that stretch reads EEPKKAKRSSKE.

As to quaternary structure, interacts (mainly via CDR1-like domain) with dimeric IgA. Interacts (mainly via CDR2-like domain) with pentameric IgM. In terms of assembly, either free or part of the secretory IgA (sIgA) complex that consists of two, four or five IgA monomers, and two additional non-Ig polypeptides, namely the JCHAIN and the secretory component (the proteolytic product of PIGR). Free secretory component interacts with bacterial antigens toxA of C.difficile and eae of E.coli. N-glycosylated. N-glycosylation is required for anchoring IgA molecules to mucus, but is not necessary for Ig binding.

It is found in the cell membrane. Its subcellular location is the secreted. In terms of biological role, mediates selective transcytosis of polymeric IgA and IgM across mucosal epithelial cells. Binds polymeric IgA and IgM at the basolateral surface of epithelial cells. The complex is then transported across the cell to be secreted at the apical surface. During this process, a cleavage occurs that separates the extracellular (known as the secretory component) from the transmembrane segment. Through its N-linked glycans ensures anchoring of secretory IgA (sIgA) molecules to mucus lining the epithelial surface to neutralize extracellular pathogens. On its own (free form) may act as a non-specific microbial scavenger to prevent pathogen interaction with epithelial cells. This chain is Polymeric immunoglobulin receptor (PIGR), found in Oryctolagus cuniculus (Rabbit).